The sequence spans 726 residues: Catalase-peroxidase (726 aa).

The segment at 1-33 (MSTTDDTHNTLSTGKCPFHQGGHDRSAGAGTAS) is disordered. Positions 105–226 (WHGAGTYRSI…LGATEMGLIY (122 aa)) form a cross-link, tryptophyl-tyrosyl-methioninium (Trp-Tyr) (with M-252). Catalysis depends on histidine 106, which acts as the Proton acceptor. The tryptophyl-tyrosyl-methioninium (Tyr-Met) (with W-105) cross-link spans 226 to 252 (YVNPEGPDHSGEPLSAAAAIRATFGNM). A heme b-binding site is contributed by histidine 267.

It belongs to the peroxidase family. Peroxidase/catalase subfamily. In terms of assembly, homodimer or homotetramer. The cofactor is heme b. Formation of the three residue Trp-Tyr-Met cross-link is important for the catalase, but not the peroxidase activity of the enzyme.

It catalyses the reaction H2O2 + AH2 = A + 2 H2O. The catalysed reaction is 2 H2O2 = O2 + 2 H2O. Its function is as follows. Bifunctional enzyme with both catalase and broad-spectrum peroxidase activity. The chain is Catalase-peroxidase from Salmonella heidelberg (strain SL476).